Here is a 570-residue protein sequence, read N- to C-terminus: Small ribosomal subunit protein bS1 (570 aa).

6 consecutive S1 motif domains span residues 52 to 116 (GAIL…LSRE), 134 to 199 (GSIV…VSRR), 220 to 288 (GERR…LGLK), 305 to 375 (GKRV…LGLK), 392 to 462 (GLRV…LGVK), and 479 to 548 (GSDI…LSIK).

It belongs to the bacterial ribosomal protein bS1 family.

Functionally, binds mRNA; thus facilitating recognition of the initiation point. It is needed to translate mRNA with a short Shine-Dalgarno (SD) purine-rich sequence. The protein is Small ribosomal subunit protein bS1 (rpsA) of Chlamydia muridarum (strain MoPn / Nigg).